The chain runs to 158 residues: NADPH-dependent 7-cyano-7-deazaguanine reductase (158 aa).

A disordered region spans residues 1-37 (MAKRSIKSETSPELQLGRPVTAPDSPETARLDRVPNP). Positions 27-37 (ETARLDRVPNP) are enriched in basic and acidic residues. C56 (thioimide intermediate) is an active-site residue. D63 serves as the catalytic Proton donor. Residues 78–80 (VES) and 97–98 (HE) contribute to the substrate site.

It belongs to the GTP cyclohydrolase I family. QueF type 1 subfamily.

The protein resides in the cytoplasm. The catalysed reaction is 7-aminomethyl-7-carbaguanine + 2 NADP(+) = 7-cyano-7-deazaguanine + 2 NADPH + 3 H(+). Its pathway is tRNA modification; tRNA-queuosine biosynthesis. In terms of biological role, catalyzes the NADPH-dependent reduction of 7-cyano-7-deazaguanine (preQ0) to 7-aminomethyl-7-deazaguanine (preQ1). The protein is NADPH-dependent 7-cyano-7-deazaguanine reductase of Bradyrhizobium sp. (strain BTAi1 / ATCC BAA-1182).